The chain runs to 308 residues: Taste receptor type 2 member 43 (308 aa).

Residue methionine 1 is a topological domain, extracellular. A helical transmembrane segment spans residues 2–22; the sequence is ITFLPIIFSILVVFTFVIGNF. At 23-46 the chain is on the cytoplasmic side; it reads ANGFIALVNSIEWVKRQKISFADQ. The helical transmembrane segment at 47–67 threads the bilayer; the sequence is ILTALAVSRVGLLWILLLNWY. At 68 to 86 the chain is on the extracellular side; that stretch reads STVLNPAFYSVEVRTIAYN. A helical transmembrane segment spans residues 87–107; it reads LWAVINHFSNWLATSLSIFYL. At 108–126 the chain is on the cytoplasmic side; it reads LKIANFSNLIFLHLRRRVK. The chain crosses the membrane as a helical span at residues 127–147; sequence SVVLVILWGPLLFLVCHLFVV. Topologically, residues 148-178 are extracellular; that stretch reads NMNEIIQTKEYEGNMTWKSKLRSAMYLSNTT. 2 N-linked (GlcNAc...) asparagine glycosylation sites follow: asparagine 161 and asparagine 176. A helical membrane pass occupies residues 179-199; that stretch reads VTILANLVPFILTLISFLLLI. The Cytoplasmic portion of the chain corresponds to 200 to 229; that stretch reads CSLCKHLKKMQLRDKGSQDPSTKVHIKALQ. Residues 230–249 traverse the membrane as a helical segment; that stretch reads TVISLSLCAIYFLSIMISSW. Residues 250 to 258 lie on the Extracellular side of the membrane; it reads SLGRVENKA. Residues 259–279 traverse the membrane as a helical segment; the sequence is IFMFCKAIRFSYPSAHAFILI. Topologically, residues 280–308 are cytoplasmic; sequence WGNKKLKQTLLSVLWNVRYCVKGQKLQSP.

Belongs to the G-protein coupled receptor T2R family.

It localises to the membrane. It is found in the cell projection. Its subcellular location is the cilium membrane. Functionally, gustducin-coupled receptor immplicated in the perception of bitter compounds in the oral cavity and the gastrointestinal tract. Signals through PLCB2 and the calcium-regulated cation channel TRPM5. Activated by the sulfonyl amide sweeteners saccharin and acesulfame K. In airway epithelial cells, binding of bitter compounds increases the intracellular calcium ion concentration and stimulates ciliary beat frequency. May act as chemosensory receptors in airway epithelial cells to detect and eliminate potential noxious agents from the airways. In Macaca mulatta (Rhesus macaque), this protein is Taste receptor type 2 member 43 (TAS2R43).